A 398-amino-acid polypeptide reads, in one-letter code: Succinate--CoA ligase [ADP-forming] subunit beta (398 aa).

The 246-residue stretch at 9–254 (KALLGEFGVP…ETEEDAKEIE (246 aa)) folds into the ATP-grasp domain. ATP contacts are provided by residues Lys-46, 53 to 55 (GRG), Glu-109, Ser-112, and Glu-117. Mg(2+) contacts are provided by Asn-209 and Asp-223. Residues Asn-274 and 331 to 333 (GIM) each bind substrate.

It belongs to the succinate/malate CoA ligase beta subunit family. In terms of assembly, heterotetramer of two alpha and two beta subunits. Mg(2+) serves as cofactor.

It catalyses the reaction succinate + ATP + CoA = succinyl-CoA + ADP + phosphate. The enzyme catalyses GTP + succinate + CoA = succinyl-CoA + GDP + phosphate. Its pathway is carbohydrate metabolism; tricarboxylic acid cycle; succinate from succinyl-CoA (ligase route): step 1/1. Succinyl-CoA synthetase functions in the citric acid cycle (TCA), coupling the hydrolysis of succinyl-CoA to the synthesis of either ATP or GTP and thus represents the only step of substrate-level phosphorylation in the TCA. The beta subunit provides nucleotide specificity of the enzyme and binds the substrate succinate, while the binding sites for coenzyme A and phosphate are found in the alpha subunit. This is Succinate--CoA ligase [ADP-forming] subunit beta from Bradyrhizobium diazoefficiens (strain JCM 10833 / BCRC 13528 / IAM 13628 / NBRC 14792 / USDA 110).